The primary structure comprises 89 residues: Small ribosomal subunit protein uS15 (89 aa).

This sequence belongs to the universal ribosomal protein uS15 family. As to quaternary structure, part of the 30S ribosomal subunit. Forms a bridge to the 50S subunit in the 70S ribosome, contacting the 23S rRNA.

Functionally, one of the primary rRNA binding proteins, it binds directly to 16S rRNA where it helps nucleate assembly of the platform of the 30S subunit by binding and bridging several RNA helices of the 16S rRNA. Forms an intersubunit bridge (bridge B4) with the 23S rRNA of the 50S subunit in the ribosome. This is Small ribosomal subunit protein uS15 from Shewanella frigidimarina (strain NCIMB 400).